Reading from the N-terminus, the 195-residue chain is Large ribosomal subunit protein bL32m (195 aa).

Residues Cys-95, Cys-98, Cys-108, and Cys-111 each contribute to the Zn(2+) site.

This sequence belongs to the bacterial ribosomal protein bL32 family. In terms of assembly, component of the mitochondrial large ribosomal subunit (mt-LSU).

It localises to the mitochondrion. In terms of biological role, component of the mitochondrial large ribosomal subunit (mt-LSU). The mitochondrial ribosome (mitoribosome) is a large ribonucleoprotein complex responsible for the synthesis of proteins inside mitochondria. The sequence is that of Large ribosomal subunit protein bL32m (mRpL32) from Drosophila melanogaster (Fruit fly).